Here is a 170-residue protein sequence, read N- to C-terminus: MKRLVFISFVALSMTAGSAMAQQGDVKFFGNVSATTCNLTPQISGTVGDTIQLGTVAPSGTGSEIPFALKASSNVGGCASLSTKTADITWSGQLTEKGFANQGGVANDSYVALKTVNGKTQGQEVKASNSTVSFDASKATTEGFKFTAQLKGGQTPGDFQGAAAYAVTYK.

The first 21 residues, 1–21, serve as a signal peptide directing secretion; that stretch reads MKRLVFISFVALSMTAGSAMA. A disulfide bridge links Cys-37 with Cys-78.

This sequence belongs to the fimbrial protein family.

It is found in the fimbrium. Its function is as follows. Fimbriae (also called pili), polar filaments radiating from the surface of the bacterium to a length of 0.5-1.5 micrometers and numbering 100-300 per cell, enable bacteria to colonize the epithelium of specific host organs. This Escherichia coli protein is F107 fimbrial protein (fedA).